Here is a 303-residue protein sequence, read N- to C-terminus: Mesenteric estrogen-dependent adipogenesis protein (303 aa).

Its subcellular location is the cytoplasm. Its function is as follows. Involved in processes that promote adipocyte differentiation, lipid accumulation, and glucose uptake in mature adipocytes. The sequence is that of Mesenteric estrogen-dependent adipogenesis protein (MEDAG) from Bos taurus (Bovine).